The following is a 236-amino-acid chain: Purine nucleoside phosphorylase DeoD-type (236 aa).

His5 is an a purine D-ribonucleoside binding site. Phosphate contacts are provided by residues Gly21, Arg25, Arg44, and 88–91; that span reads RVGS. Residues 180 to 182 and 204 to 205 contribute to the a purine D-ribonucleoside site; these read EME and SD. Catalysis depends on Asp205, which acts as the Proton donor.

It belongs to the PNP/UDP phosphorylase family. Homohexamer; trimer of homodimers.

The catalysed reaction is a purine D-ribonucleoside + phosphate = a purine nucleobase + alpha-D-ribose 1-phosphate. The enzyme catalyses a purine 2'-deoxy-D-ribonucleoside + phosphate = a purine nucleobase + 2-deoxy-alpha-D-ribose 1-phosphate. Catalyzes the reversible phosphorolytic breakdown of the N-glycosidic bond in the beta-(deoxy)ribonucleoside molecules, with the formation of the corresponding free purine bases and pentose-1-phosphate. The sequence is that of Purine nucleoside phosphorylase DeoD-type from Psychromonas ingrahamii (strain DSM 17664 / CCUG 51855 / 37).